Here is a 498-residue protein sequence, read N- to C-terminus: XK-related protein 4 (498 aa).

The tract at residues 24-46 (SEHSGSVQGLHPGAQPDSAGAGD) is disordered. 2 consecutive transmembrane segments (helical) span residues 81–101 (CLWIVAAVAVYVADVGSDVWL) and 111–131 (YWWFGLTLFFVVLGSFSVQLF). A disordered region spans residues 166-203 (SHGDVTAQHHPATPQRQASTASRNTTTNSTASTGLGPR). Residues 183-198 (ASTASRNTTTNSTAST) show a composition bias toward low complexity. 2 consecutive transmembrane segments (helical) span residues 302 to 322 (LFIYYLLILAENAALSALWYL) and 332 to 352 (FAVPALCVIFSSFLTGVVFML).

Belongs to the XK family.

The protein localises to the cell membrane. The catalysed reaction is a 1,2-diacyl-sn-glycero-3-phospho-L-serine(in) = a 1,2-diacyl-sn-glycero-3-phospho-L-serine(out). In terms of biological role, phospholipid scramblase that promotes phosphatidylserine exposure on apoptotic cell surface. Phosphatidylserine is a specific marker only present at the surface of apoptotic cells and acts as a specific signal for engulfment. The sequence is that of XK-related protein 4 from Tetraodon nigroviridis (Spotted green pufferfish).